A 332-amino-acid polypeptide reads, in one-letter code: MATRAVARRQSATGETADSASSVRAHGGEIADRDLVGMYLDEIARTPLLDAAKEVELSQTIEAGVFAQQVLDGEEESRTDATREELQALVDAGERAKDVFIRSNLRLVVAVARRYPRSGLPLLDLIQEGNAGLVRAVEKFDYRKGFKFSTYATWWIRQAITRSIADQSRTIRLPVHLVEELGRIRRVQREFNREHGRDPEPAEVAAELGSTPERVIDVLDWARDPVSLNMAVDDAGETQFGDLLEDTSAVSPEQSVLTLLRSEELDDLIGRLDQRTASIIKMRYGIDDGRERTLTEVGKEHGLTRERIRQIEKHALLELKKLARDTGFDAAA.

The segment at 1–25 (MATRAVARRQSATGETADSASSVRA) is disordered. Over residues 10–22 (QSATGETADSASS) the composition is skewed to polar residues. A Polymerase core binding motif is present at residues 124-137 (DLIQEGNAGLVRAV). A DNA-binding region (H-T-H motif) is located at residues 294 to 313 (LTEVGKEHGLTRERIRQIEK).

This sequence belongs to the sigma-70 factor family.

In terms of biological role, sigma factors are initiation factors that promote the attachment of RNA polymerase to specific initiation sites and are then released. The protein is RNA polymerase principal sigma factor HrdD (hrdD) of Streptomyces viridifaciens.